The sequence spans 237 residues: 1-(5-phosphoribosyl)-5-[(5-phosphoribosylamino)methylideneamino] imidazole-4-carboxamide isomerase (237 aa).

Catalysis depends on Asp-8, which acts as the Proton acceptor. Asp-129 acts as the Proton donor in catalysis.

The protein belongs to the HisA/HisF family.

It localises to the cytoplasm. The enzyme catalyses 1-(5-phospho-beta-D-ribosyl)-5-[(5-phospho-beta-D-ribosylamino)methylideneamino]imidazole-4-carboxamide = 5-[(5-phospho-1-deoxy-D-ribulos-1-ylimino)methylamino]-1-(5-phospho-beta-D-ribosyl)imidazole-4-carboxamide. It participates in amino-acid biosynthesis; L-histidine biosynthesis; L-histidine from 5-phospho-alpha-D-ribose 1-diphosphate: step 4/9. This Methanosphaera stadtmanae (strain ATCC 43021 / DSM 3091 / JCM 11832 / MCB-3) protein is 1-(5-phosphoribosyl)-5-[(5-phosphoribosylamino)methylideneamino] imidazole-4-carboxamide isomerase.